We begin with the raw amino-acid sequence, 271 residues long: uncharacterized protein (271 aa).

The signal sequence occupies residues 1-22; that stretch reads MARELLFLACAIVIADSWPAKA.

This is an uncharacterized protein from Sinorhizobium fredii (strain NBRC 101917 / NGR234).